The primary structure comprises 360 residues: Nicotinate-nucleotide--dimethylbenzimidazole phosphoribosyltransferase (360 aa).

Glu-327 (proton acceptor) is an active-site residue.

It belongs to the CobT family.

It carries out the reaction 5,6-dimethylbenzimidazole + nicotinate beta-D-ribonucleotide = alpha-ribazole 5'-phosphate + nicotinate + H(+). Its pathway is nucleoside biosynthesis; alpha-ribazole biosynthesis; alpha-ribazole from 5,6-dimethylbenzimidazole: step 1/2. Its function is as follows. Catalyzes the synthesis of alpha-ribazole-5'-phosphate from nicotinate mononucleotide (NAMN) and 5,6-dimethylbenzimidazole (DMB). This is Nicotinate-nucleotide--dimethylbenzimidazole phosphoribosyltransferase from Shewanella baltica (strain OS185).